Here is a 44-residue protein sequence, read N- to C-terminus: Photosystem I reaction center subunit IX (44 aa).

The chain crosses the membrane as a helical span at residues 7–27 (YLSVAPVLSTLWFGSLAGLLI).

This sequence belongs to the PsaJ family.

It localises to the plastid. Its subcellular location is the chloroplast thylakoid membrane. Its function is as follows. May help in the organization of the PsaE and PsaF subunits. In Lactuca sativa (Garden lettuce), this protein is Photosystem I reaction center subunit IX.